The following is a 211-amino-acid chain: MRPRAAGFTLIEVLLATMLLVGGLALAFATLRSASAISQRGEAIAQRSERTRAVEEFLRRRLSAALPIAMGIDTQSQQPMLFVGEPQRMRFAADVPDYLGRGGPYLHDVSVVGDGEQRTLTIALTMLQSGKEIEEGNALPAETLADDVQQVSFRYRGLDPQSGALSGWLPQWEWHDRLPLLVRIDIRSGGAAWPPVVVALPQSGGGGALAQ.

The propeptide at 1–7 (MRPRAAG) is leader sequence. Position 8 is an N-methylphenylalanine (Phe8). A helical transmembrane segment spans residues 8-28 (FTLIEVLLATMLLVGGLALAF).

This sequence belongs to the GSP J family.

It localises to the membrane. Involved in a type II secretion system (T2SS, formerly general secretion pathway, GSP) for the export of proteins. This is Type II secretion system protein J (xpsJ) from Xanthomonas campestris pv. campestris (strain ATCC 33913 / DSM 3586 / NCPPB 528 / LMG 568 / P 25).